Here is a 498-residue protein sequence, read N- to C-terminus: Probable deoxyguanosinetriphosphate triphosphohydrolase (498 aa).

One can recognise an HD domain in the interval 71 to 262; it reads RLTHSLEVQQ…MEAADDISYC (192 aa).

The protein belongs to the dGTPase family. Type 1 subfamily. Mg(2+) serves as cofactor.

The catalysed reaction is dGTP + H2O = 2'-deoxyguanosine + triphosphate + H(+). Its function is as follows. dGTPase preferentially hydrolyzes dGTP over the other canonical NTPs. The sequence is that of Probable deoxyguanosinetriphosphate triphosphohydrolase from Pseudomonas aeruginosa (strain ATCC 15692 / DSM 22644 / CIP 104116 / JCM 14847 / LMG 12228 / 1C / PRS 101 / PAO1).